The sequence spans 229 residues: Translation initiation factor IF-3 (229 aa).

Disordered stretches follow at residues 1 to 21 (MAIQQRDSRGGTNRDARTNRR) and 184 to 229 (QAQR…AGPR). Over residues 192-203 (AAAQAAPAAAPQ) the composition is skewed to low complexity. Residues 204-221 (PGAPAAPPAAPAPAPAPE) are compositionally biased toward pro residues.

This sequence belongs to the IF-3 family. Monomer.

The protein localises to the cytoplasm. IF-3 binds to the 30S ribosomal subunit and shifts the equilibrium between 70S ribosomes and their 50S and 30S subunits in favor of the free subunits, thus enhancing the availability of 30S subunits on which protein synthesis initiation begins. This chain is Translation initiation factor IF-3, found in Anaeromyxobacter sp. (strain Fw109-5).